Here is a 306-residue protein sequence, read N- to C-terminus: Probable cobalamin biosynthesis protein CobD (306 aa).

5 helical membrane-spanning segments follow: residues 54–74 (LFGF…TYEI), 88–108 (ISIY…IEFS), 155–175 (ITDS…PGAF), 215–235 (IAGM…KSAI), and 286–306 (SLKA…VLLM).

It belongs to the CobD/CbiB family.

The protein resides in the cell membrane. Its pathway is cofactor biosynthesis; adenosylcobalamin biosynthesis. Converts cobyric acid to cobinamide by the addition of aminopropanol on the F carboxylic group. The chain is Probable cobalamin biosynthesis protein CobD from Methanococcus maripaludis (strain C7 / ATCC BAA-1331).